The following is a 510-amino-acid chain: Probable cytosol aminopeptidase (510 aa).

Mn(2+)-binding residues include Lys-272 and Asp-277. Lys-284 is a catalytic residue. Residues Asp-296, Asp-355, and Glu-357 each coordinate Mn(2+). Arg-359 is an active-site residue.

It belongs to the peptidase M17 family. It depends on Mn(2+) as a cofactor.

The protein localises to the cytoplasm. The catalysed reaction is Release of an N-terminal amino acid, Xaa-|-Yaa-, in which Xaa is preferably Leu, but may be other amino acids including Pro although not Arg or Lys, and Yaa may be Pro. Amino acid amides and methyl esters are also readily hydrolyzed, but rates on arylamides are exceedingly low.. It carries out the reaction Release of an N-terminal amino acid, preferentially leucine, but not glutamic or aspartic acids.. In terms of biological role, presumably involved in the processing and regular turnover of intracellular proteins. Catalyzes the removal of unsubstituted N-terminal amino acids from various peptides. In Synechococcus sp. (strain JA-3-3Ab) (Cyanobacteria bacterium Yellowstone A-Prime), this protein is Probable cytosol aminopeptidase.